We begin with the raw amino-acid sequence, 217 residues long: 3,4-dihydroxy-2-butanone 4-phosphate synthase (217 aa).

D-ribulose 5-phosphate contacts are provided by residues 37–38 (RE), aspartate 42, 150–154 (RGGHT), and glutamate 174. Residue glutamate 38 coordinates Mg(2+). Mg(2+) is bound at residue histidine 153.

The protein belongs to the DHBP synthase family. Homodimer. The cofactor is Mg(2+). Requires Mn(2+) as cofactor.

The enzyme catalyses D-ribulose 5-phosphate = (2S)-2-hydroxy-3-oxobutyl phosphate + formate + H(+). It functions in the pathway cofactor biosynthesis; riboflavin biosynthesis; 2-hydroxy-3-oxobutyl phosphate from D-ribulose 5-phosphate: step 1/1. Its function is as follows. Catalyzes the conversion of D-ribulose 5-phosphate to formate and 3,4-dihydroxy-2-butanone 4-phosphate. The protein is 3,4-dihydroxy-2-butanone 4-phosphate synthase of Escherichia fergusonii (strain ATCC 35469 / DSM 13698 / CCUG 18766 / IAM 14443 / JCM 21226 / LMG 7866 / NBRC 102419 / NCTC 12128 / CDC 0568-73).